Here is a 330-residue protein sequence, read N- to C-terminus: Putative protein DDB_G0285185 (330 aa).

The disordered stretch occupies residues 212-240 (NKLQNQVQSSPKLSSPITKNKEQIVSTTS). The segment covering 214 to 240 (LQNQVQSSPKLSSPITKNKEQIVSTTS) has biased composition (polar residues).

In Dictyostelium discoideum (Social amoeba), this protein is Putative protein DDB_G0285185.